A 370-amino-acid chain; its full sequence is Dual-specificity RNA methyltransferase RlmN (370 aa).

E93 functions as the Proton acceptor in the catalytic mechanism. One can recognise a Radical SAM core domain in the interval 99 to 337 (EEGRGTLCVS…VTTVRKTRGD (239 aa)). Residues C106 and C343 are joined by a disulfide bond. Residues C113, C117, and C120 each contribute to the [4Fe-4S] cluster site. S-adenosyl-L-methionine contacts are provided by residues 167–168 (GE), S199, 221–223 (SLH), and N300. The active-site S-methylcysteine intermediate is the C343.

Belongs to the radical SAM superfamily. RlmN family. It depends on [4Fe-4S] cluster as a cofactor.

It is found in the cytoplasm. It carries out the reaction adenosine(2503) in 23S rRNA + 2 reduced [2Fe-2S]-[ferredoxin] + 2 S-adenosyl-L-methionine = 2-methyladenosine(2503) in 23S rRNA + 5'-deoxyadenosine + L-methionine + 2 oxidized [2Fe-2S]-[ferredoxin] + S-adenosyl-L-homocysteine. It catalyses the reaction adenosine(37) in tRNA + 2 reduced [2Fe-2S]-[ferredoxin] + 2 S-adenosyl-L-methionine = 2-methyladenosine(37) in tRNA + 5'-deoxyadenosine + L-methionine + 2 oxidized [2Fe-2S]-[ferredoxin] + S-adenosyl-L-homocysteine. Its function is as follows. Specifically methylates position 2 of adenine 2503 in 23S rRNA and position 2 of adenine 37 in tRNAs. m2A2503 modification seems to play a crucial role in the proofreading step occurring at the peptidyl transferase center and thus would serve to optimize ribosomal fidelity. This chain is Dual-specificity RNA methyltransferase RlmN, found in Francisella philomiragia subsp. philomiragia (strain ATCC 25017 / CCUG 19701 / FSC 153 / O#319-036).